The primary structure comprises 629 residues: Filament-like plant protein 2 (629 aa).

2 coiled-coil regions span residues 34 to 61 (WEKA…LEDR) and 102 to 171 (NTGL…LEAE). Positions 186-205 (SSNQSVDSHSDGGRERVEGS) are disordered. The segment covering 193 to 203 (SHSDGGRERVE) has biased composition (basic and acidic residues). Positions 270–493 (ELSLMEKLEK…IEEKTMIKRE (224 aa)) form a coiled coil.

It belongs to the FPP family. As to quaternary structure, interacts with WPP/MAF proteins. Binds to COG2; this interaction promotes the association between cortical microtubules and EXO70A1. Accumulates in preferentially xylem cells.

It localises to the vesicle. Functionally, ensures, when in complex with FPP3/VETH1 and COG2, the correct secondary cell wall (SCW) deposition pattern by recruiting exocyst components to cortical microtubules in xylem cells during secondary cell wall deposition by recruiting EXO70A1. The protein is Filament-like plant protein 2 of Arabidopsis thaliana (Mouse-ear cress).